Here is a 357-residue protein sequence, read N- to C-terminus: Ribonuclease 3 (357 aa).

An RNase III domain is found at 6–155; that stretch reads IKFIQDQIGY…ILGAIALDSN (150 aa). E45 serves as a coordination point for Mg(2+). The active site involves D49. Residues D141 and E144 each contribute to the Mg(2+) site. E144 is an active-site residue. DRBM domains are found at residues 198–267 and 285–355; these read PLHC…YLKD and DSIG…FVLE.

This sequence belongs to the ribonuclease III family. Homodimer. Mg(2+) serves as cofactor.

The protein localises to the cytoplasm. The enzyme catalyses Endonucleolytic cleavage to 5'-phosphomonoester.. Digests double-stranded RNA. Involved in the processing of primary rRNA transcript to yield the immediate precursors to the large and small rRNAs (23S and 16S). Processes some mRNAs, and tRNAs when they are encoded in the rRNA operon. Processes pre-crRNA and tracrRNA of type II CRISPR loci if present in the organism. This Roseburia hominis (strain DSM 16839 / JCM 17582 / NCIMB 14029 / A2-183) protein is Ribonuclease 3 (rnc).